A 156-amino-acid chain; its full sequence is Small ribosomal subunit protein uS7 (156 aa).

The protein belongs to the universal ribosomal protein uS7 family. As to quaternary structure, part of the 30S ribosomal subunit. Contacts proteins S9 and S11.

Its function is as follows. One of the primary rRNA binding proteins, it binds directly to 16S rRNA where it nucleates assembly of the head domain of the 30S subunit. Is located at the subunit interface close to the decoding center, probably blocks exit of the E-site tRNA. The sequence is that of Small ribosomal subunit protein uS7 from Kineococcus radiotolerans (strain ATCC BAA-149 / DSM 14245 / SRS30216).